Here is a 350-residue protein sequence, read N- to C-terminus: Probable transposase-like protein At4g04430 (350 aa).

Disordered regions lie at residues 1 to 57 and 307 to 328; these read MPSD…PSVN and QIGQ…QVAN. The segment covering 30-43 has biased composition (low complexity); the sequence is SGVQGSGSRSGSTV.

The protein belongs to the transposase 24 family.

This Arabidopsis thaliana (Mouse-ear cress) protein is Probable transposase-like protein At4g04430.